A 54-amino-acid chain; its full sequence is Preprotein translocase subunit SecG (54 aa).

The Cytoplasmic portion of the chain corresponds to 1-31; the sequence is MSSGQNSGGLMSSAGLVRYFDAEDRNSIRID. The chain crosses the membrane as a helical span at residues 32 to 53; that stretch reads PKTIVAFGVLFGVGVLVLNALA. Position 54 (Ile54) is a topological domain, extracellular.

It belongs to the SEC61-beta family. In terms of assembly, component of the protein translocase complex. Heterotrimer consisting of alpha (SecY), beta (SecG) and gamma (SecE) subunits. Can form oligomers of the heterotrimer.

The protein resides in the cell membrane. In terms of biological role, involved in protein export. The function of the beta subunit is unknown, but it may be involved in stabilization of the trimeric complex. The chain is Preprotein translocase subunit SecG from Haloquadratum walsbyi (strain DSM 16790 / HBSQ001).